A 201-amino-acid polypeptide reads, in one-letter code: uncharacterized protein (201 aa).

2 disordered regions span residues 46 to 80 (PLVNPKYDNPQIESAELDGSQNDNYSTDTSQSYDE) and 143 to 201 (SSTS…ANPA). 2 stretches are compositionally biased toward polar residues: residues 64–78 (GSQNDNYSTDTSQSY) and 143–167 (SSTSAKTIQNDKPATDVSLGSNSPA).

This is an uncharacterized protein from Legionella pneumophila.